The chain runs to 343 residues: Holliday junction branch migration complex subunit RuvB (343 aa).

The tract at residues 1-23 is disordered; sequence MSDDFEVVRPEEQAGDEKDRDLR. Residues 1 to 183 are large ATPase domain (RuvB-L); that stretch reads MSDDFEVVRP…FGIVQRFEFY (183 aa). ATP is bound by residues Leu-22, Arg-23, Gly-64, Lys-67, Thr-68, Thr-69, 130-132, Arg-173, Tyr-183, and Arg-220; that span reads EDY. Thr-68 serves as a coordination point for Mg(2+). Residues 184–254 form a small ATPAse domain (RuvB-S) region; the sequence is SHEELASIIS…TVAAGLKQLN (71 aa). Residues 257–343 form a head domain (RuvB-H) region; it reads GLGLETYDRQ…LGDGQEGLFD (87 aa). Positions 312 and 317 each coordinate DNA.

Belongs to the RuvB family. In terms of assembly, homohexamer. Forms an RuvA(8)-RuvB(12)-Holliday junction (HJ) complex. HJ DNA is sandwiched between 2 RuvA tetramers; dsDNA enters through RuvA and exits via RuvB. An RuvB hexamer assembles on each DNA strand where it exits the tetramer. Each RuvB hexamer is contacted by two RuvA subunits (via domain III) on 2 adjacent RuvB subunits; this complex drives branch migration. In the full resolvosome a probable DNA-RuvA(4)-RuvB(12)-RuvC(2) complex forms which resolves the HJ.

Its subcellular location is the cytoplasm. The catalysed reaction is ATP + H2O = ADP + phosphate + H(+). Functionally, the RuvA-RuvB-RuvC complex processes Holliday junction (HJ) DNA during genetic recombination and DNA repair, while the RuvA-RuvB complex plays an important role in the rescue of blocked DNA replication forks via replication fork reversal (RFR). RuvA specifically binds to HJ cruciform DNA, conferring on it an open structure. The RuvB hexamer acts as an ATP-dependent pump, pulling dsDNA into and through the RuvAB complex. RuvB forms 2 homohexamers on either side of HJ DNA bound by 1 or 2 RuvA tetramers; 4 subunits per hexamer contact DNA at a time. Coordinated motions by a converter formed by DNA-disengaged RuvB subunits stimulates ATP hydrolysis and nucleotide exchange. Immobilization of the converter enables RuvB to convert the ATP-contained energy into a lever motion, pulling 2 nucleotides of DNA out of the RuvA tetramer per ATP hydrolyzed, thus driving DNA branch migration. The RuvB motors rotate together with the DNA substrate, which together with the progressing nucleotide cycle form the mechanistic basis for DNA recombination by continuous HJ branch migration. Branch migration allows RuvC to scan DNA until it finds its consensus sequence, where it cleaves and resolves cruciform DNA. This Treponema denticola (strain ATCC 35405 / DSM 14222 / CIP 103919 / JCM 8153 / KCTC 15104) protein is Holliday junction branch migration complex subunit RuvB.